The chain runs to 148 residues: Large ribosomal subunit protein uL22c (148 aa).

The protein belongs to the universal ribosomal protein uL22 family. Part of the 50S ribosomal subunit.

The protein resides in the plastid. It is found in the chloroplast. In terms of biological role, this protein binds specifically to 23S rRNA. Its function is as follows. The globular domain of the protein is located near the polypeptide exit tunnel on the outside of the subunit, while an extended beta-hairpin is found that lines the wall of the exit tunnel in the center of the 70S ribosome. In Zea mays (Maize), this protein is Large ribosomal subunit protein uL22c (rpl22).